We begin with the raw amino-acid sequence, 192 residues long: Leucine-rich repeat-containing protein 51 (192 aa).

3 LRR repeats span residues 49 to 71 (SLTQ…NQVA), 80 to 101 (NLAW…LTTF), and 103 to 124 (NLSV…NKLA). The region spanning 137–175 (NPMEEEKGYRQYVLCTLSRITTFDFAGVTKADRTTAEVW) is the LRRCT domain.

It localises to the cytoplasm. The protein is Leucine-rich repeat-containing protein 51 of Pan troglodytes (Chimpanzee).